The sequence spans 162 residues: Small ribosomal subunit protein uS9 (162 aa).

It belongs to the universal ribosomal protein uS9 family.

This is Small ribosomal subunit protein uS9 from Methylobacterium nodulans (strain LMG 21967 / CNCM I-2342 / ORS 2060).